The primary structure comprises 356 residues: Alanine racemase, catabolic (356 aa).

K35 (proton acceptor; specific for D-alanine) is an active-site residue. K35 carries the N6-(pyridoxal phosphate)lysine modification. R130 serves as a coordination point for substrate. Y253 functions as the Proton acceptor; specific for L-alanine in the catalytic mechanism. M301 is a binding site for substrate.

It belongs to the alanine racemase family. The cofactor is pyridoxal 5'-phosphate.

It carries out the reaction L-alanine = D-alanine. Functionally, isomerizes L-alanine to D-alanine which is then oxidized to pyruvate by DadA. The chain is Alanine racemase, catabolic (dadX) from Escherichia coli O157:H7.